A 367-amino-acid polypeptide reads, in one-letter code: MALSDLLELTLLLLLPLLERLSAEDCPCSEASLCRPIRHHRDFEVFVFDVGQKTWKSYDWSQITTVAVFGKYDSELMCYAHSKGARVVLKGDVALKDIINPTFRASWIAQKVALAKAQHMDGINIDIEQEVDCSSPEYEALTALVRETTEGFHREIEGSQVTFDVAWSPKGIDKRCYNYTGIADACDFLFVMSYDEQSQIWSECIAAANAPYNQTLTGYGDYLRMGISPRKLVMGIPWYGYDYICLNLSKDDVCAIAKVPFRGAPCSDAAGHQVPYRVIMKQVNSSVSGSQWNQDQQAPYYNYKDPTGRLHQVWYDNPRSISLKAAFVKHYGLRGIGMWNANCLDYSDDALAREQTEEMWGALRPRL.

The first 23 residues, 1-23 (MALSDLLELTLLLLLPLLERLSA), serve as a signal peptide directing secretion. Positions 24–367 (EDCPCSEASL…EMWGALRPRL (344 aa)) constitute a GH18 domain. The Proton donor role is filled by Glu-128. Asn-178, Asn-213, Asn-247, and Asn-284 each carry an N-linked (GlcNAc...) asparagine glycan.

It belongs to the glycosyl hydrolase 18 family.

The protein resides in the lysosome. Functionally, involved in the degradation of asparagine-linked glycoproteins. Hydrolyze of N-acetyl-beta-D-glucosamine (1-4)N-acetylglucosamine chitobiose core from the reducing end of the bond, it requires prior cleavage by glycosylasparaginase. This Rattus norvegicus (Rat) protein is Di-N-acetylchitobiase (Ctbs).